The chain runs to 597 residues: Fructan 1-exohydrolase w1 (597 aa).

The signal sequence occupies residues 1–20 (MAQAWAFLLPVLVFGSYVTS). The active site involves D76. N169, N237, and N249 each carry an N-linked (GlcNAc...) asparagine glycan. C447 and C493 are disulfide-bonded. N568 carries an N-linked (GlcNAc...) asparagine glycan.

It belongs to the glycosyl hydrolase 32 family.

It catalyses the reaction Hydrolysis of terminal, non-reducing (2-&gt;1)-linked beta-D-fructofuranose residues in fructans.. Its activity is regulated as follows. Inhibited by sucrose. In terms of biological role, hydrolyzes inulin-type beta-(2,1)-fructans and beta-(2,1)-linkages in branched fructans. Has low activity against beta-(2,6)-linked fructans. May play a role as a beta-(2,1)-trimmer during graminan biosynthesis. This chain is Fructan 1-exohydrolase w1, found in Triticum aestivum (Wheat).